The sequence spans 88 residues: Small ribosomal subunit protein bS20 (88 aa).

The protein belongs to the bacterial ribosomal protein bS20 family.

Its function is as follows. Binds directly to 16S ribosomal RNA. In Clostridium botulinum (strain ATCC 19397 / Type A), this protein is Small ribosomal subunit protein bS20.